Reading from the N-terminus, the 234-residue chain is Isoprenyl transferase (234 aa).

Residue aspartate 13 is part of the active site. Aspartate 13 lines the Mg(2+) pocket. Residues 14-17, tryptophan 18, arginine 26, histidine 30, and 58-60 each bind substrate; these read GNGR and STE. Catalysis depends on asparagine 61, which acts as the Proton acceptor. Residues tryptophan 62, arginine 64, arginine 180, and 186–188 each bind substrate; that span reads RLS. Residue glutamate 199 participates in Mg(2+) binding.

It belongs to the UPP synthase family. In terms of assembly, homodimer. Mg(2+) serves as cofactor.

Its function is as follows. Catalyzes the condensation of isopentenyl diphosphate (IPP) with allylic pyrophosphates generating different type of terpenoids. This chain is Isoprenyl transferase, found in Helicobacter pylori (strain J99 / ATCC 700824) (Campylobacter pylori J99).